Consider the following 209-residue polypeptide: Small ribosomal subunit protein uS4 (209 aa).

A disordered region spans residues 23-46 (SRNPLLKKPHPPGQHGMQRKKKSD). Positions 93-156 (CRLDNMVYRM…RKLQSVQESL (64 aa)) constitute an S4 RNA-binding domain.

This sequence belongs to the universal ribosomal protein uS4 family. In terms of assembly, part of the 30S ribosomal subunit. Contacts protein S5. The interaction surface between S4 and S5 is involved in control of translational fidelity.

One of the primary rRNA binding proteins, it binds directly to 16S rRNA where it nucleates assembly of the body of the 30S subunit. In terms of biological role, with S5 and S12 plays an important role in translational accuracy. The polypeptide is Small ribosomal subunit protein uS4 (Chlamydia felis (strain Fe/C-56) (Chlamydophila felis)).